Consider the following 313-residue polypeptide: Ribosomal RNA small subunit methyltransferase H (313 aa).

S-adenosyl-L-methionine contacts are provided by residues 35–37 (GGH), D55, F79, D101, and Q108.

It belongs to the methyltransferase superfamily. RsmH family.

The protein localises to the cytoplasm. It catalyses the reaction cytidine(1402) in 16S rRNA + S-adenosyl-L-methionine = N(4)-methylcytidine(1402) in 16S rRNA + S-adenosyl-L-homocysteine + H(+). Its function is as follows. Specifically methylates the N4 position of cytidine in position 1402 (C1402) of 16S rRNA. The polypeptide is Ribosomal RNA small subunit methyltransferase H (Salmonella typhi).